A 304-amino-acid chain; its full sequence is MDLSVLDRLKWLQQQQMVSPEFLQILGSDGREELKRVESYLGNNNDELQSFRHFPEFGPDYDTTDGCISRTSSFHMEPVKNNGHSRAITLQNKRKPEGKTEKREKKKIKAEDETEPSMKGKSNMSNTETSSEIQKPDYIHVRARRGEATDRHSLAERARREKISKKMKCLQDIVPGCNKVTGKAGMLDEIINYVQSLQQQVEFLSMKLSVINPELECHIDDLSAKQFQAYFTGPPEGDSKQSIMADFRSFPLHQQGSLDYSVINSDHTTSLGAKDHTSSSWETHSQCLYNSLRTDSVSNFFSLK.

The interval 74-132 (FHMEPVKNNGHSRAITLQNKRKPEGKTEKREKKKIKAEDETEPSMKGKSNMSNTETSSE) is disordered. Residues 82 to 91 (NGHSRAITLQ) are compositionally biased toward polar residues. The segment covering 94–103 (RKPEGKTEKR) has biased composition (basic and acidic residues). A compositionally biased stretch (polar residues) spans 120–132 (GKSNMSNTETSSE). The region spanning 147–197 (EATDRHSLAERARREKISKKMKCLQDIVPGCNKVTGKAGMLDEIINYVQSL) is the bHLH domain.

Homodimer. As to expression, expressed in stems and flowers.

The protein localises to the nucleus. Functionally, positive regulator of brassinosteroid signaling. The chain is Transcription factor BEE 2 (BEE2) from Arabidopsis thaliana (Mouse-ear cress).